The primary structure comprises 473 residues: H(+)/Cl(-) exchange transporter ClcA (473 aa).

Residues 1–32 (MKTDTSTFLAQQIVRLRRRDQIRRLMQRDKTP) lie on the Cytoplasmic side of the membrane. Residues 33–69 (LAILFMAAVVGTLTGLVGVAFEKAVSWVQNMRIGALV) form a helical membrane-spanning segment. Over 70–76 (QVADHAF) the chain is Periplasmic. Residues 77 to 100 (LLWPLAFILSALLAMVGYFLVRKF) traverse the membrane as a helical segment. The short motif at 106–110 (GSGIP) is the Selectivity filter part_1 element. Position 107 (serine 107) interacts with chloride. An intramembrane region (helical) is located at residues 109–116 (IPEIEGAL). Topologically, residues 117 to 123 (EELRPVR) are cytoplasmic. 2 helical membrane passes run 124–141 (WWRV…TLGA) and 148–166 (EGPT…LDVF). The Selectivity filter part_2 motif lies at 146–150 (GREGP). The Cytoplasmic portion of the chain corresponds to 167 to 176 (RMRSAEARHT). Intramembrane regions (helical) lie at residues 177–189 (LLAT…LSAA) and 193–201 (PLAGILFII). The Cytoplasmic portion of the chain corresponds to 202–214 (EEMRPQFRYNLIS). Residues 215 to 232 (IKAVFTGVIMSSIVFRIF) traverse the membrane as a helical segment. Over 233–252 (NGEAPIIEVGKLSDAPVNTL) the chain is Periplasmic. A helical transmembrane segment spans residues 253–281 (WLYLILGIIFGCVGPVFNSLVLRTQDMFQ). The Cytoplasmic segment spans residues 282-287 (RFHGGE). The helical transmembrane segment at 288–309 (IKKWVLMGGAIGGLCGILGLIE) threads the bilayer. The Periplasmic portion of the chain corresponds to 310 to 329 (PEAAGGGFNLIPIAAAGNFS). 2 helical membrane-spanning segments follow: residues 330-349 (VGLL…LCFS) and 355-376 (GIFA…MAAA). The short motif at 355–359 (GIFAP) is the Selectivity filter part_3 element. Isoleucine 356 and phenylalanine 357 together coordinate chloride. The Periplasmic portion of the chain corresponds to 377-386 (VLFPQYHLEA). An intramembrane region (helical) is located at residues 387–401 (GTFAIAGMGALMAAS). The note=Loop between two helices intramembrane region spans 402-404 (VRA). Positions 405–416 (PLTGIVLVLEMT) form an intramembrane region, helical. Residues 417–421 (DNYQL) constitute an intramembrane region (note=Loop between two helices). Residues 422 to 438 (ILPMIITCLGATLLAQF) form a helical membrane-spanning segment. The Cytoplasmic segment spans residues 439–473 (LGGKPLYSTILARTLAKQDAEQAAKNQNAPAGENT). A chloride-binding site is contributed by tyrosine 445.

It belongs to the chloride channel (TC 2.A.49) family. ClcA subfamily. Homodimer.

It localises to the cell inner membrane. The catalysed reaction is 2 chloride(in) + H(+)(out) = 2 chloride(out) + H(+)(in). In terms of biological role, proton-coupled chloride transporter. Functions as antiport system and exchanges two chloride ions for 1 proton. Probably acts as an electrical shunt for an outwardly-directed proton pump that is linked to amino acid decarboxylation, as part of the extreme acid resistance (XAR) response. This Salmonella agona (strain SL483) protein is H(+)/Cl(-) exchange transporter ClcA.